The sequence spans 510 residues: NAD(P)H-quinone oxidoreductase subunit 2 B, chloroplastic (510 aa).

Transmembrane regions (helical) follow at residues 26-46 (LFDG…ILLL), 57-77 (IPWF…ALLF), 99-119 (IFQF…VEYI), 124-144 (MAIT…MFLC), 149-169 (LITI…LSGY), 183-203 (YLLM…WLYG), 227-247 (PGIS…LSPA), 295-315 (WHPL…LIAI), 323-342 (MLAY…IIVG), 354-374 (YMLF…LFGL), 395-415 (ALSL…AGFF), 418-438 (LHLF…IGLF), and 484-504 (MIVC…IIAI).

This sequence belongs to the complex I subunit 2 family. As to quaternary structure, NDH is composed of at least 16 different subunits, 5 of which are encoded in the nucleus.

The protein resides in the plastid. It localises to the chloroplast thylakoid membrane. The catalysed reaction is a plastoquinone + NADH + (n+1) H(+)(in) = a plastoquinol + NAD(+) + n H(+)(out). It catalyses the reaction a plastoquinone + NADPH + (n+1) H(+)(in) = a plastoquinol + NADP(+) + n H(+)(out). Its function is as follows. NDH shuttles electrons from NAD(P)H:plastoquinone, via FMN and iron-sulfur (Fe-S) centers, to quinones in the photosynthetic chain and possibly in a chloroplast respiratory chain. The immediate electron acceptor for the enzyme in this species is believed to be plastoquinone. Couples the redox reaction to proton translocation, and thus conserves the redox energy in a proton gradient. The polypeptide is NAD(P)H-quinone oxidoreductase subunit 2 B, chloroplastic (Oenothera argillicola (Appalachian evening primrose)).